A 95-amino-acid chain; its full sequence is Mitochondrial import inner membrane translocase subunit Tim9 (95 aa).

Positions 35 to 59 (CFTDCIRDFTTRDVKDSEEKCSLNC) match the Twin CX3C motif motif. 2 disulfides stabilise this stretch: Cys35-Cys59 and Cys39-Cys55.

It belongs to the small Tim family. In terms of assembly, heterohexamer; composed of 3 copies of Tim9 and 3 copies of Tim10, named soluble 70 kDa complex. The complex associates with the Tim22 component of the TIM22 complex. Interacts with multi-pass transmembrane proteins in transit.

The protein resides in the mitochondrion inner membrane. In terms of biological role, mitochondrial intermembrane chaperone that participates in the import and insertion of multi-pass transmembrane proteins into the mitochondrial inner membrane. May also be required for the transfer of beta-barrel precursors from the TOM complex to the sorting and assembly machinery (SAM complex) of the outer membrane. Acts as a chaperone-like protein that protects the hydrophobic precursors from aggregation and guide them through the mitochondrial intermembrane space. In Drosophila melanogaster (Fruit fly), this protein is Mitochondrial import inner membrane translocase subunit Tim9 (Tim9a).